Here is a 396-residue protein sequence, read N- to C-terminus: Anhydro-N-acetylmuramic acid kinase (396 aa).

Residue 19 to 26 (GTSADGID) coordinates ATP.

It belongs to the anhydro-N-acetylmuramic acid kinase family.

It carries out the reaction 1,6-anhydro-N-acetyl-beta-muramate + ATP + H2O = N-acetyl-D-muramate 6-phosphate + ADP + H(+). Its pathway is amino-sugar metabolism; 1,6-anhydro-N-acetylmuramate degradation. It functions in the pathway cell wall biogenesis; peptidoglycan recycling. In terms of biological role, catalyzes the specific phosphorylation of 1,6-anhydro-N-acetylmuramic acid (anhMurNAc) with the simultaneous cleavage of the 1,6-anhydro ring, generating MurNAc-6-P. Is required for the utilization of anhMurNAc either imported from the medium or derived from its own cell wall murein, and thus plays a role in cell wall recycling. This is Anhydro-N-acetylmuramic acid kinase from Colwellia psychrerythraea (strain 34H / ATCC BAA-681) (Vibrio psychroerythus).